The primary structure comprises 249 residues: Transmembrane protein 150C (249 aa).

Topologically, residues 1-9 (MDGKKCSVW) are cytoplasmic. Residues 10–30 (MFLPLVFTLFTSAGLWIVYFI) traverse the membrane as a helical segment. Over 31-64 (AVEDDKILPLNSAERKPGVKHAPYISIAGDDPPA) the chain is Extracellular. A helical transmembrane segment spans residues 65-85 (SCVFSQVMNMAAFLALVVAVL). At 86 to 97 (RFIQLKPKVLNP) the chain is on the cytoplasmic side. Residues 98–118 (WLNISGLVALCLASFGMTLLG) form a helical membrane-spanning segment. Residues 119 to 130 (NFQLTNDEEIHN) lie on the Extracellular side of the membrane. The chain crosses the membrane as a helical span at residues 131-151 (VGTSLTFGFGTLTCWIQAALT). Residues 152 to 168 (LKVNIKNEGRRVGIPRV) are Cytoplasmic-facing. The chain crosses the membrane as a helical span at residues 169-189 (ILSASITLCVVLYFILMAQSI). The Extracellular segment spans residues 190 to 192 (HMY). A helical transmembrane segment spans residues 193-213 (AARVQWGLVMCFLSYFGTFAV). Topologically, residues 214–249 (EFRHYRYEIVCSEYQENFLSFSESLSEASEYQTDQV) are cytoplasmic.

The protein belongs to the DRAM/TMEM150 family.

It localises to the cell membrane. The protein resides in the lysosome membrane. The catalysed reaction is Ca(2+)(in) = Ca(2+)(out). It catalyses the reaction Na(+)(in) = Na(+)(out). The enzyme catalyses K(+)(in) = K(+)(out). It carries out the reaction Mg(2+)(in) = Mg(2+)(out). Its function is as follows. Nonselective cationic channel with high permeability to Ca(2+). Component of a mechanosensitive cation channel, confers mechanically activated (MA) currents with slow inactivation kinetics. May contribute to proprioception. This is Transmembrane protein 150C from Homo sapiens (Human).